Here is a 254-residue protein sequence, read N- to C-terminus: MVPWLGPDDPFPSIERALGPATGAPGLLAASADLLPSRLIDAYLRGIFPWYSDGQPVLWWSPDPRMILVPAEFKVSPSLRKTLKRVLRAPEWEVRVDHDFAGVMRACAQAPRRGQRGTWITAEIIDAYTSLYRSGNAHSIETWHDGRRVGGLYGVSFGRMFFGESMYADVTDASKIALAALIAHLREQRLEMIDCQQNTSHLASLGGREIARKAFVAHVRSAVAEPPIPWQFDKRVLAALTSPAETAAPTGTER.

The protein belongs to the L/F-transferase family.

The protein localises to the cytoplasm. The enzyme catalyses N-terminal L-lysyl-[protein] + L-leucyl-tRNA(Leu) = N-terminal L-leucyl-L-lysyl-[protein] + tRNA(Leu) + H(+). It carries out the reaction N-terminal L-arginyl-[protein] + L-leucyl-tRNA(Leu) = N-terminal L-leucyl-L-arginyl-[protein] + tRNA(Leu) + H(+). It catalyses the reaction L-phenylalanyl-tRNA(Phe) + an N-terminal L-alpha-aminoacyl-[protein] = an N-terminal L-phenylalanyl-L-alpha-aminoacyl-[protein] + tRNA(Phe). Its function is as follows. Functions in the N-end rule pathway of protein degradation where it conjugates Leu, Phe and, less efficiently, Met from aminoacyl-tRNAs to the N-termini of proteins containing an N-terminal arginine or lysine. The chain is Leucyl/phenylalanyl-tRNA--protein transferase from Burkholderia cenocepacia (strain HI2424).